Consider the following 1735-residue polypeptide: Inactive tyrosine-protein kinase PEAK1 (1735 aa).

Disordered stretches follow at residues 26–66 and 111–145; these read LHQL…PPVA and LSQK…KISN. Composition is skewed to polar residues over residues 111–121 and 130–145; these read LSQKPLNNNSE and DPQQ…KISN. S282 carries the post-translational modification Phosphoserine. 3 disordered regions span residues 324 to 410, 491 to 514, and 537 to 580; these read NSGV…SVKV, GRPK…LTPG, and SPRQ…SKTI. The segment covering 325–336 has biased composition (low complexity); that stretch reads SGVSYGQGSVQS. Positions 337 to 365 are enriched in polar residues; it reads TISSDCTSPGSSFTEESRSETASSLSQKV. Low complexity predominate over residues 367-378; that stretch reads NGGISPGNPGNS. Over residues 384 to 393 the composition is skewed to polar residues; the sequence is TESNFESPPG. Over residues 498-509 the composition is skewed to low complexity; that stretch reads SSSTPNSPVTSP. A phosphoserine mark is found at S537, S569, and S584. Polar residues predominate over residues 566–580; it reads APTSPTATNISSKTI. 2 positions are modified to phosphotyrosine: Y632 and Y638. S645 carries the phosphoserine modification. The residue at position 662 (Y662) is a Phosphotyrosine. 3 disordered regions span residues 663 to 762, 800 to 919, and 1019 to 1097; these read EEIE…REKA, PDAD…AADA, and RNSE…SATY. 3 stretches are compositionally biased toward polar residues: residues 704–735, 745–757, and 819–839; these read QEFN…QRPT, AQGS…SSNS, and LFTS…SPTA. S824 and S825 each carry phosphoserine. Positions 847 to 863 are enriched in low complexity; the sequence is TKPVTSPPSKLVTSAQS. Pro residues predominate over residues 864 to 873; sequence EPPPPFPPPR. Residues 879–901 are compositionally biased toward polar residues; the sequence is YHASNLLQRHFTNWTKPTSPTRS. Position 897 is a phosphoserine (S897). Composition is skewed to basic and acidic residues over residues 902–919 and 1037–1055; these read TEAE…AADA and ACSR…RDPR. The span at 1076-1086 shows a compositional bias: acidic residues; that stretch reads EREEEKDDTLD. Position 1141 is a phosphothreonine (T1141). Y1177 is subject to Phosphotyrosine. The tract at residues 1274–1300 is required for homodimerization; it reads EVVGKLRSLHTDALKRLAVKCEDLFMA. A Protein kinase domain is found at 1302-1664; the sequence is QKDQLRFGVD…LLWGPREDLF (363 aa). S1363 is subject to Phosphoserine. Residues 1394-1445 form a disordered region; it reads WEDPDAPEKAEDGTEDSEEEGKAETLGGNPEPCSETEPSQKENQRVTNRKQR. Residues 1659-1732 are required for homodimerization; that stretch reads PREDLFQIFT…DSLSYIVKIL (74 aa).

It belongs to the protein kinase superfamily. Homodimer. Interacts with BCAR1 and CRK. Interacts with PRAG1. Interacts (when phosphorylated at Tyr-1177) with SHC1 (via PID domain). Found in a complex with PPP1CA, PPP1CC and SHC1. Interacts (when phosphorylated at Tyr-632) with tensin TNS3 (when phosphorylated on the SH2 domain); TNS3 also interacts with integrins ITGB1, ITGB3 and ITGB5 and mediates their association with PEAK1. Phosphorylated on tyrosine in a CSK-dependent manner in response to adhesion to fibronectin and to EGF stimulation. Phosphorylation at Tyr-662 by a Src family kinase controls subcellular localization to focal adhesion and focal adhesion dynamics. Phosphorylation at Tyr-1177 is essential for binding to SHC1. Phosphorylation at Tyr-632 promotes interaction with tensin TNS3.

The protein resides in the cytoplasm. The protein localises to the cytoskeleton. It is found in the cell junction. Its subcellular location is the focal adhesion. Probable catalytically inactive kinase. Scaffolding protein that regulates the cytoskeleton to control cell spreading and migration by modulating focal adhesion dynamics. Acts as a scaffold for mediating EGFR signaling. This Mus musculus (Mouse) protein is Inactive tyrosine-protein kinase PEAK1 (Peak1).